The following is a 452-amino-acid chain: Fructose-2,6-bisphosphatase (452 aa).

Positions Met1–Lys223 are 6-phosphofructo-2-kinase. An ATP-binding site is contributed by Gly20 to Phe28. Residues Arg53 and Arg78 each contribute to the beta-D-fructose 6-phosphate site. Residue Asp104 is part of the active site. 2 residues coordinate beta-D-fructose 6-phosphate: Thr106 and Arg112. Asn143–Gly148 is an ATP binding site. Positions 169 and 173 each coordinate beta-D-fructose 6-phosphate. Positions Pro224–Phe452 are fructose-2,6-bisphosphatase. Arg231 contributes to the beta-D-fructose 2,6-bisphosphate binding site. Residue His232 is the Tele-phosphohistidine intermediate of the active site. Asn238 and Gly244 together coordinate beta-D-fructose 2,6-bisphosphate. The active-site Proton donor/acceptor is the Glu302. Beta-D-fructose 2,6-bisphosphate is bound by residues Tyr313, Arg327, Lys331, Tyr342, Gln368, and Arg372. Phe324 to Arg327 lines the ATP pocket. ATP-binding positions include Gln368–Arg372 and Tyr404. Phosphoserine is present on residues Ser435 and Ser446.

It in the C-terminal section; belongs to the phosphoglycerate mutase family.

The catalysed reaction is beta-D-fructose 2,6-bisphosphate + H2O = beta-D-fructose 6-phosphate + phosphate. Inhibited by fructose 6-P, activated by glycerol 3-P. Monofunctional, high-specificity fructose-2,6-bisphosphatase, which releases phosphate from the 2-position of fructose 2,6-bisphosphate. Has no detectable 6-phosphofructo-2-kinase activity. The sequence is that of Fructose-2,6-bisphosphatase from Saccharomyces cerevisiae (strain ATCC 204508 / S288c) (Baker's yeast).